Reading from the N-terminus, the 1391-residue chain is DNA-directed RNA polymerase subunit beta (1391 aa).

The protein belongs to the RNA polymerase beta chain family. In terms of assembly, the RNAP catalytic core consists of 2 alpha, 1 beta, 1 beta' and 1 omega subunit. When a sigma factor is associated with the core the holoenzyme is formed, which can initiate transcription.

The enzyme catalyses RNA(n) + a ribonucleoside 5'-triphosphate = RNA(n+1) + diphosphate. Its function is as follows. DNA-dependent RNA polymerase catalyzes the transcription of DNA into RNA using the four ribonucleoside triphosphates as substrates. This Paramagnetospirillum magneticum (strain ATCC 700264 / AMB-1) (Magnetospirillum magneticum) protein is DNA-directed RNA polymerase subunit beta.